The primary structure comprises 546 residues: Chaperonin GroEL (546 aa).

Residues 30-33 (TLGP), lysine 51, 87-91 (DGTTT), glycine 415, 479-481 (NAA), and aspartate 495 contribute to the ATP site.

This sequence belongs to the chaperonin (HSP60) family. Forms a cylinder of 14 subunits composed of two heptameric rings stacked back-to-back. Interacts with the co-chaperonin GroES.

It is found in the cytoplasm. The catalysed reaction is ATP + H2O + a folded polypeptide = ADP + phosphate + an unfolded polypeptide.. In terms of biological role, together with its co-chaperonin GroES, plays an essential role in assisting protein folding. The GroEL-GroES system forms a nano-cage that allows encapsulation of the non-native substrate proteins and provides a physical environment optimized to promote and accelerate protein folding. The chain is Chaperonin GroEL from Pseudomonas putida (strain ATCC 47054 / DSM 6125 / CFBP 8728 / NCIMB 11950 / KT2440).